The following is a 666-amino-acid chain: tRNA 5-methylaminomethyl-2-thiouridine biosynthesis bifunctional protein MnmC (666 aa).

The interval 1 to 245 is tRNA (mnm(5)s(2)U34)-methyltransferase; the sequence is MKQYAIQPAT…KREMLCGVME (245 aa). The tract at residues 270-666 is FAD-dependent cmnm(5)s(2)U34 oxidoreductase; that stretch reads IGGGIASALL…RKLLKGKAVK (397 aa).

This sequence in the N-terminal section; belongs to the methyltransferase superfamily. tRNA (mnm(5)s(2)U34)-methyltransferase family. The protein in the C-terminal section; belongs to the DAO family. Requires FAD as cofactor.

It localises to the cytoplasm. The enzyme catalyses 5-aminomethyl-2-thiouridine(34) in tRNA + S-adenosyl-L-methionine = 5-methylaminomethyl-2-thiouridine(34) in tRNA + S-adenosyl-L-homocysteine + H(+). Functionally, catalyzes the last two steps in the biosynthesis of 5-methylaminomethyl-2-thiouridine (mnm(5)s(2)U) at the wobble position (U34) in tRNA. Catalyzes the FAD-dependent demodification of cmnm(5)s(2)U34 to nm(5)s(2)U34, followed by the transfer of a methyl group from S-adenosyl-L-methionine to nm(5)s(2)U34, to form mnm(5)s(2)U34. This chain is tRNA 5-methylaminomethyl-2-thiouridine biosynthesis bifunctional protein MnmC, found in Salmonella arizonae (strain ATCC BAA-731 / CDC346-86 / RSK2980).